The sequence spans 131 residues: MRHRKSGRQLNRNSSHRRAMFRNMASSLVRHEIIKTTVPKAKELRRVVEPLITLAKTDSVANRRLAFARIRDNDIVVKLFNELGPRFVSRAGGYTRILKCGSRAGDNAPVAYIELLDRSVSEPEPTTHTNA.

Belongs to the bacterial ribosomal protein bL17 family. In terms of assembly, part of the 50S ribosomal subunit. Contacts protein L32.

The sequence is that of Large ribosomal subunit protein bL17 from Hamiltonella defensa subsp. Acyrthosiphon pisum (strain 5AT).